Consider the following 395-residue polypeptide: Chalcone synthase (395 aa).

The active site involves C169.

This sequence belongs to the thiolase-like superfamily. Chalcone/stilbene synthases family.

The enzyme catalyses (E)-4-coumaroyl-CoA + 3 malonyl-CoA + 3 H(+) = 2',4,4',6'-tetrahydroxychalcone + 3 CO2 + 4 CoA. The protein operates within secondary metabolite biosynthesis; flavonoid biosynthesis. Functionally, the primary product of this enzyme is 4,2',4',6'-tetrahydroxychalcone (also termed naringenin-chalcone or chalcone) which can under specific conditions spontaneously isomerize into naringenin. The protein is Chalcone synthase (CHS) of Pinus strobus (Eastern white pine).